The primary structure comprises 394 residues: Myb-like protein R (394 aa).

The next 2 membrane-spanning stretches (helical) occupy residues 11–31 (IGAQ…EFII) and 99–119 (FFIG…LIIF). The region spanning 325 to 377 (GNWSLDEQKALMVEVSTLGNKSEINWFFISKQLFLKGISRNARECQRKHESIQ) is the Myb-like domain.

It is found in the membrane. This is Myb-like protein R (mybR) from Dictyostelium discoideum (Social amoeba).